We begin with the raw amino-acid sequence, 363 residues long: MATAPRSLDTISLCSTVSSCPDRNGFYGGFQRTDKPKEPLSKAQIIAREKKWLYMIDNWSIYMSKNYKKIRDRCRKGIPKSVRPKAWFYLSGAYLLKKKNPNVYNELLEKPGNPTTIEEIKKDKHRQFPFHEMFLDEQKVGQIELFNVLKAYSIYNPKVGFCQAQAPIAAFLLMHLPAEDAFWVFVSVCDVYLQDYFIPGLEVIQNDAGILEGLLKKTCPPVYRHLQKHKVEPLLYMTDWFLCAMTRTLPWETLLRVWDCFLAEGIRVIFKVALVIIGASLSRHKVRKTCTGLCETLAVLRSPEEHIVEEEFIINNMMRLNLRVEDFQIEHTRQKARRAKQKAQQEAESSGSGNGHRRNMPTL.

A Rab-GAP TBC domain is found at 77-265; the sequence is GIPKSVRPKA…RVWDCFLAEG (189 aa). The disordered stretch occupies residues 335-363; it reads KARRAKQKAQQEAESSGSGNGHRRNMPTL.

The protein resides in the apical cell membrane. Its subcellular location is the cytoplasmic vesicle. It is found in the cell projection. The protein localises to the filopodium. In terms of biological role, essential for ensuring the polarized growth of tracheal seamless tubes. During seamless tube morphogenesis, likely to act as a GTPase-activating protein (GAP) for Rab35 to regulate vesicle trafficking from the recycling endosomes to the lumenal apical membrane to ensure the polarized dynein motor complex-dependent growth of seamless tubes along the proximodistal axis in tracheal terminal cells. When the terminal branch lumen is growing, Rab35-GTP is active and likely directs the transport of apical membrane vesicles from the soma to the distal tip of elongating terminal cell branches thus providing a continuous supply of apical membrane components as the lumen grows. Whereas when Rab35-GDP is inactivated, presumably by this GAP, apical membrane vesicles are transported to a central location adjacent to the terminal cell nucleus. This Drosophila melanogaster (Fruit fly) protein is TBC1 domain family member whacked.